Consider the following 186-residue polypeptide: Peptidyl-tRNA hydrolase (186 aa).

Tyr14 is a tRNA binding site. The active-site Proton acceptor is the His19. Positions 64, 66, and 113 each coordinate tRNA.

It belongs to the PTH family. In terms of assembly, monomer.

The protein resides in the cytoplasm. It carries out the reaction an N-acyl-L-alpha-aminoacyl-tRNA + H2O = an N-acyl-L-amino acid + a tRNA + H(+). Its function is as follows. Hydrolyzes ribosome-free peptidyl-tRNAs (with 1 or more amino acids incorporated), which drop off the ribosome during protein synthesis, or as a result of ribosome stalling. Catalyzes the release of premature peptidyl moieties from peptidyl-tRNA molecules trapped in stalled 50S ribosomal subunits, and thus maintains levels of free tRNAs and 50S ribosomes. This Agathobacter rectalis (strain ATCC 33656 / DSM 3377 / JCM 17463 / KCTC 5835 / VPI 0990) (Eubacterium rectale) protein is Peptidyl-tRNA hydrolase.